The following is a 391-amino-acid chain: Succinyl-diaminopimelate desuccinylase (391 aa).

Histidine 67 contributes to the Zn(2+) binding site. Aspartate 69 is a catalytic residue. Aspartate 101 is a Zn(2+) binding site. Glutamate 135 functions as the Proton acceptor in the catalytic mechanism. Positions 136, 164, and 353 each coordinate Zn(2+).

This sequence belongs to the peptidase M20A family. DapE subfamily. As to quaternary structure, homodimer. Zn(2+) serves as cofactor. The cofactor is Co(2+).

The enzyme catalyses N-succinyl-(2S,6S)-2,6-diaminopimelate + H2O = (2S,6S)-2,6-diaminopimelate + succinate. Its pathway is amino-acid biosynthesis; L-lysine biosynthesis via DAP pathway; LL-2,6-diaminopimelate from (S)-tetrahydrodipicolinate (succinylase route): step 3/3. Catalyzes the hydrolysis of N-succinyl-L,L-diaminopimelic acid (SDAP), forming succinate and LL-2,6-diaminopimelate (DAP), an intermediate involved in the bacterial biosynthesis of lysine and meso-diaminopimelic acid, an essential component of bacterial cell walls. The protein is Succinyl-diaminopimelate desuccinylase of Rickettsia bellii (strain RML369-C).